The sequence spans 716 residues: Polyribonucleotide nucleotidyltransferase (716 aa).

Mg(2+) is bound by residues Asp485 and Asp491. Residues 552-611 (PRFTTIKIDQDKIKDVIGKGGAVIRELTESTNTNIEIGDDGTIKVAASDQADADAAIEKI) enclose the KH domain. An S1 motif domain is found at 621–689 (GKIYQGKVAR…RQGRVRLSMK (69 aa)). A compositionally biased stretch (basic and acidic residues) spans 689–698 (KEAAEKKEEP). Residues 689–716 (KEAAEKKEEPAPEAPAEPAAEEENKSEE) are disordered. A compositionally biased stretch (acidic residues) spans 707–716 (AAEEENKSEE).

This sequence belongs to the polyribonucleotide nucleotidyltransferase family. Component of the RNA degradosome, which is a multiprotein complex involved in RNA processing and mRNA degradation. Mg(2+) serves as cofactor.

It localises to the cytoplasm. It carries out the reaction RNA(n+1) + phosphate = RNA(n) + a ribonucleoside 5'-diphosphate. Functionally, involved in mRNA degradation. Catalyzes the phosphorolysis of single-stranded polyribonucleotides processively in the 3'- to 5'-direction. In Idiomarina loihiensis (strain ATCC BAA-735 / DSM 15497 / L2-TR), this protein is Polyribonucleotide nucleotidyltransferase.